The chain runs to 420 residues: L-cysteine:1D-myo-inositol 2-amino-2-deoxy-alpha-D-glucopyranoside ligase (420 aa).

Cysteine 46 is a binding site for Zn(2+). L-cysteinyl-5'-AMP is bound by residues 46-49, threonine 61, and 84-86; these read CGIT and NVT. The short motif at 48-58 is the 'HIGH' region element; sequence ITPYDSTHLGH. The short motif at 194–199 is the 'ERGGDP' region element; sequence ERGGDP. L-cysteinyl-5'-AMP is bound at residue tryptophan 235. Cysteine 239 contacts Zn(2+). 257 to 259 lines the L-cysteinyl-5'-AMP pocket; sequence GTD. Residue histidine 264 participates in Zn(2+) binding. Valine 291 provides a ligand contact to L-cysteinyl-5'-AMP. Positions 297–301 match the 'KMSKS' region motif; the sequence is KMSKS.

It belongs to the class-I aminoacyl-tRNA synthetase family. MshC subfamily. In terms of assembly, monomer. Requires Zn(2+) as cofactor.

The enzyme catalyses 1D-myo-inositol 2-amino-2-deoxy-alpha-D-glucopyranoside + L-cysteine + ATP = 1D-myo-inositol 2-(L-cysteinylamino)-2-deoxy-alpha-D-glucopyranoside + AMP + diphosphate + H(+). Its function is as follows. Catalyzes the ATP-dependent condensation of GlcN-Ins and L-cysteine to form L-Cys-GlcN-Ins. The sequence is that of L-cysteine:1D-myo-inositol 2-amino-2-deoxy-alpha-D-glucopyranoside ligase from Beutenbergia cavernae (strain ATCC BAA-8 / DSM 12333 / CCUG 43141 / JCM 11478 / NBRC 16432 / NCIMB 13614 / HKI 0122).